Here is a 537-residue protein sequence, read N- to C-terminus: O-phosphoserine--tRNA(Cys) ligase (537 aa).

Substrate-binding positions include 186-188 (HMT), 231-233 (SAS), 273-274 (YY), and asparagine 317.

This sequence belongs to the class-II aminoacyl-tRNA synthetase family. O-phosphoseryl-tRNA(Cys) synthetase subfamily. In terms of assembly, homotetramer. Interacts with SepCysS.

It catalyses the reaction tRNA(Cys) + O-phospho-L-serine + ATP = O-phospho-L-seryl-tRNA(Cys) + AMP + diphosphate. Functionally, catalyzes the attachment of O-phosphoserine (Sep) to tRNA(Cys). The protein is O-phosphoserine--tRNA(Cys) ligase of Methanococcus maripaludis (strain C6 / ATCC BAA-1332).